The primary structure comprises 157 residues: Ribosome maturation factor RimP (157 aa).

The protein belongs to the RimP family.

The protein resides in the cytoplasm. Required for maturation of 30S ribosomal subunits. The chain is Ribosome maturation factor RimP from Geobacillus kaustophilus (strain HTA426).